We begin with the raw amino-acid sequence, 2569 residues long: Highly reducing polyketide synthase pks5 (2569 aa).

The disordered stretch occupies residues 1-25 (MVVKFANGVRNRGNGDEGQRGTQRP). The region spanning 27–452 (STPIAIVGMS…GTNVHVIMEA (426 aa)) is the Ketosynthase family 3 (KS3) domain. Active-site for beta-ketoacyl synthase activity residues include Cys200, His335, and His375. Residues 572–892 (IFNGQGAQWY…PYLSCLRRNI (321 aa)) are malonyl-CoA:ACP transacylase (MAT) domain. Positions 960–1097 (HELLGSSVPG…GYVSAEDSSK (138 aa)) are N-terminal hotdog fold. The tract at residues 960 to 1268 (HELLGSSVPG…LRLQKIQAED (309 aa)) is dehydratase (DH) domain. In terms of domain architecture, PKS/mFAS DH spans 960–1270 (HELLGSSVPG…LQKIQAEDDN (311 aa)). His992 (proton acceptor; for dehydratase activity) is an active-site residue. The segment at 1117–1270 (RVRHVRPDAM…LQKIQAEDDN (154 aa)) is C-terminal hotdog fold. Residue Asp1179 is the Proton donor; for dehydratase activity of the active site. Positions 1457-1567 (LEVGAGTGGA…RKLLKPKGKL (111 aa)) are methyltransferase (CMet) domain. The interval 1855–2170 (DLLNKIEFLE…SGTHMGKIVL (316 aa)) is enoyl reductase (ER) domain. A ketoreductase (KR) domain region spans residues 2195–2371 (THLIVGGLRG…AISINLGPVD (177 aa)). The 78-residue stretch at 2485–2562 (AARKLVSELI…DFAALVASRS (78 aa)) folds into the Carrier domain. Ser2522 is subject to O-(pantetheine 4'-phosphoryl)serine.

Highly reducing polyketide synthase; part of the gene cluster that mediates the biosynthesis of abscisic acid (ABA), a phytohormone that acts antagonistically toward salicylic acid (SA), jasmonic acid (JA) and ethylene (ETH) signaling, to impede plant defense responses. The first step of the pathway catalyzes the reaction from farnesyl diphosphate to alpha-ionylideneethane performed by the alpha-ionylideneethane synthase abl3 via a three-step reaction mechanism involving 2 neutral intermediates, beta-farnesene and allofarnesene. The cytochrome P450 monooxygenase abl1 might then be involved in the conversion of alpha-ionylideneethane to alpha-ionylideneacetic acid. Alpha-ionylideneacetic acid is further converted to abscisic acid in 2 steps involving the cytochrome P450 monooxygenase abl2 and the short-chain dehydrogenase/reductase abl4, via the intermediates 1'-deoxy-ABA or 1',4'-trans-diol-ABA, depending on the order of action of these 2 enzymes. Abl2 is responsible for the hydroxylation of carbon atom C-1' and abl4 might be involved in the oxidation of the C-4' carbon atom. Pks5 is clearly not involved in the production of ABA. Nonetheless, the possibility cannot be excluded that pks5 may modify ABA into another compound. It also cannot be excluded the possibility that pks5 also has a function completely independent of ABA synthesis. Pks5 is not required for pathogenicity on B.napus cotyledon. The polypeptide is Highly reducing polyketide synthase pks5 (Leptosphaeria maculans (strain JN3 / isolate v23.1.3 / race Av1-4-5-6-7-8) (Blackleg fungus)).